Reading from the N-terminus, the 336-residue chain is Ketol-acid reductoisomerase (NADP(+)) (336 aa).

A KARI N-terminal Rossmann domain is found at 5-185 (SKIYTDKDSN…GATRAGVIPT (181 aa)). NADP(+)-binding positions include 28–31 (YGSQ), serine 56, and 86–89 (DMVQ). Histidine 111 is a catalytic residue. Residue glycine 137 coordinates NADP(+). The KARI C-terminal knotted domain maps to 186–331 (TFKEETETDL…NQLKDLIQKG (146 aa)). Mg(2+) contacts are provided by aspartate 194, glutamate 198, glutamate 230, and glutamate 234. Serine 255 lines the substrate pocket.

Belongs to the ketol-acid reductoisomerase family. The cofactor is Mg(2+).

It carries out the reaction (2R)-2,3-dihydroxy-3-methylbutanoate + NADP(+) = (2S)-2-acetolactate + NADPH + H(+). It catalyses the reaction (2R,3R)-2,3-dihydroxy-3-methylpentanoate + NADP(+) = (S)-2-ethyl-2-hydroxy-3-oxobutanoate + NADPH + H(+). It participates in amino-acid biosynthesis; L-isoleucine biosynthesis; L-isoleucine from 2-oxobutanoate: step 2/4. It functions in the pathway amino-acid biosynthesis; L-valine biosynthesis; L-valine from pyruvate: step 2/4. Functionally, involved in the biosynthesis of branched-chain amino acids (BCAA). Catalyzes an alkyl-migration followed by a ketol-acid reduction of (S)-2-acetolactate (S2AL) to yield (R)-2,3-dihydroxy-isovalerate. In the isomerase reaction, S2AL is rearranged via a Mg-dependent methyl migration to produce 3-hydroxy-3-methyl-2-ketobutyrate (HMKB). In the reductase reaction, this 2-ketoacid undergoes a metal-dependent reduction by NADPH to yield (R)-2,3-dihydroxy-isovalerate. This Saccharolobus islandicus (strain Y.N.15.51 / Yellowstone #2) (Sulfolobus islandicus) protein is Ketol-acid reductoisomerase (NADP(+)).